Reading from the N-terminus, the 158-residue chain is Mitotic-spindle organizing protein 2A (158 aa).

Ser34 carries the phosphoserine modification. The interval Arg84–Thr158 is disordered. Low complexity predominate over residues Ser112–Ala122. Residues Glu128 to Ala140 are compositionally biased toward polar residues. Phosphoserine is present on Ser152.

Belongs to the MOZART2 family. As to quaternary structure, associates with the gamma-tubulin ring complex (gTuRC) consisting of TUBGCP2, TUBGCP3, TUBGCP4, TUBGCP5 and TUBGCP6 and gamma-tubulin TUBG1 or TUBG2; within the complex, interacts with TUBGCP2; the interaction plays a role in gTuRC activation.

The protein localises to the cytoplasm. It localises to the cytoskeleton. It is found in the microtubule organizing center. The protein resides in the centrosome. Its subcellular location is the spindle. Its function is as follows. Required for the recruitment and the assembly of the gamma-tubulin ring complex (gTuRC) at the centrosome. The gTuRC regulates the minus-end nucleation of alpha-beta tubulin heterodimers that grow into microtubule protafilaments, a critical step in centrosome duplication and spindle formation. In Homo sapiens (Human), this protein is Mitotic-spindle organizing protein 2A (MZT2A).